We begin with the raw amino-acid sequence, 130 residues long: Large ribosomal subunit protein eL32 (130 aa).

Belongs to the eukaryotic ribosomal protein eL32 family.

The protein is Large ribosomal subunit protein eL32 (rpl32e) of Pyrococcus horikoshii (strain ATCC 700860 / DSM 12428 / JCM 9974 / NBRC 100139 / OT-3).